The chain runs to 258 residues: tRNA pseudouridine synthase A (258 aa).

The active-site Nucleophile is the Asp-52. Tyr-110 contributes to the substrate binding site.

It belongs to the tRNA pseudouridine synthase TruA family. Homodimer.

The catalysed reaction is uridine(38/39/40) in tRNA = pseudouridine(38/39/40) in tRNA. In terms of biological role, formation of pseudouridine at positions 38, 39 and 40 in the anticodon stem and loop of transfer RNAs. This Francisella tularensis subsp. tularensis (strain FSC 198) protein is tRNA pseudouridine synthase A.